A 126-amino-acid chain; its full sequence is 13 kDa ribonucleoprotein-associated protein (126 aa).

This sequence belongs to the eukaryotic ribosomal protein eL8 family. In terms of assembly, component of the U3 snoRNP particle. Binds to the C'/D and B/C motifs in U3 snoRNA. Component of the 25S U4/U6.U5 tri-snRNP particle, a subcomplex of the spliceosome. Binds to the 5' stem-loop of U4 snRNA.

The protein resides in the nucleus. It is found in the nucleolus. Its function is as follows. Common component of the spliceosome and rRNA processing machinery. In association with the spliceosomal U4/U6.U5 tri-snRNP particle, required for splicing of pre-mRNA. In association with box C/D snoRNPs, required for processing of pre-ribosomal RNA (rRNA) and site-specific 2'-O-methylation of substrate RNAs. Essential for the accumulation and stability of U4 snRNA, U6 snRNA, and box C/D snoRNAs. This is 13 kDa ribonucleoprotein-associated protein (SNU13) from Debaryomyces hansenii (strain ATCC 36239 / CBS 767 / BCRC 21394 / JCM 1990 / NBRC 0083 / IGC 2968) (Yeast).